A 195-amino-acid chain; its full sequence is Imidazole glycerol phosphate synthase subunit HisH (195 aa).

Positions 1–195 constitute a Glutamine amidotransferase type-1 domain; it reads MIAVVDLGIG…LRLLENFRRL (195 aa). Catalysis depends on cysteine 72, which acts as the Nucleophile. Catalysis depends on residues histidine 177 and glutamate 179.

As to quaternary structure, heterodimer of HisH and HisF.

The protein resides in the cytoplasm. The enzyme catalyses 5-[(5-phospho-1-deoxy-D-ribulos-1-ylimino)methylamino]-1-(5-phospho-beta-D-ribosyl)imidazole-4-carboxamide + L-glutamine = D-erythro-1-(imidazol-4-yl)glycerol 3-phosphate + 5-amino-1-(5-phospho-beta-D-ribosyl)imidazole-4-carboxamide + L-glutamate + H(+). It catalyses the reaction L-glutamine + H2O = L-glutamate + NH4(+). It participates in amino-acid biosynthesis; L-histidine biosynthesis; L-histidine from 5-phospho-alpha-D-ribose 1-diphosphate: step 5/9. Functionally, IGPS catalyzes the conversion of PRFAR and glutamine to IGP, AICAR and glutamate. The HisH subunit catalyzes the hydrolysis of glutamine to glutamate and ammonia as part of the synthesis of IGP and AICAR. The resulting ammonia molecule is channeled to the active site of HisF. In Thermococcus kodakarensis (strain ATCC BAA-918 / JCM 12380 / KOD1) (Pyrococcus kodakaraensis (strain KOD1)), this protein is Imidazole glycerol phosphate synthase subunit HisH.